The chain runs to 181 residues: MVTPRRDSGSDRPSLKDARILVVEARYYDDIADELLRGATEAIAASGAEAEVVTVPGALEIPQTVAILVEAAMRSGKPYDAVVALGCVIRGETGHYDIVAGESARALMDLSVLLRLPLGNGILTVETEAQAQARARVSEMNKGGGAAEAALAVLALKRANAAEHPGRTIGFTPRRAAETAE.

5-amino-6-(D-ribitylamino)uracil contacts are provided by residues Y27, 58-60, and 87-89; these read ALE and CVI. A (2S)-2-hydroxy-3-oxobutyl phosphate-binding site is contributed by 92 to 93; sequence ET. H95 functions as the Proton donor in the catalytic mechanism. N120 is a binding site for 5-amino-6-(D-ribitylamino)uracil. R134 serves as a coordination point for (2S)-2-hydroxy-3-oxobutyl phosphate.

Belongs to the DMRL synthase family.

It carries out the reaction (2S)-2-hydroxy-3-oxobutyl phosphate + 5-amino-6-(D-ribitylamino)uracil = 6,7-dimethyl-8-(1-D-ribityl)lumazine + phosphate + 2 H2O + H(+). Its pathway is cofactor biosynthesis; riboflavin biosynthesis; riboflavin from 2-hydroxy-3-oxobutyl phosphate and 5-amino-6-(D-ribitylamino)uracil: step 1/2. Catalyzes the formation of 6,7-dimethyl-8-ribityllumazine by condensation of 5-amino-6-(D-ribitylamino)uracil with 3,4-dihydroxy-2-butanone 4-phosphate. This is the penultimate step in the biosynthesis of riboflavin. The protein is 6,7-dimethyl-8-ribityllumazine synthase of Methylobacterium nodulans (strain LMG 21967 / CNCM I-2342 / ORS 2060).